A 465-amino-acid polypeptide reads, in one-letter code: Phenylalanine--tRNA ligase alpha subunit (465 aa).

L-phenylalanine is bound by residues threonine 309, 348-350 (QLD), and phenylalanine 388. Glutamate 390 contacts Mg(2+).

Belongs to the class-II aminoacyl-tRNA synthetase family. Phe-tRNA synthetase alpha subunit type 2 subfamily. In terms of assembly, tetramer of two alpha and two beta subunits. The cofactor is Mg(2+).

The protein resides in the cytoplasm. The catalysed reaction is tRNA(Phe) + L-phenylalanine + ATP = L-phenylalanyl-tRNA(Phe) + AMP + diphosphate + H(+). This chain is Phenylalanine--tRNA ligase alpha subunit, found in Sulfolobus acidocaldarius (strain ATCC 33909 / DSM 639 / JCM 8929 / NBRC 15157 / NCIMB 11770).